The chain runs to 142 residues: Protein archease (142 aa).

Ca(2+)-binding residues include D12, D141, and L142.

Belongs to the archease family.

Its function is as follows. Activates the tRNA-splicing ligase complex by facilitating the enzymatic turnover of catalytic subunit RtcB. Acts by promoting the guanylylation of RtcB, a key intermediate step in tRNA ligation. Can also alter the NTP specificity of RtcB such that ATP, dGTP or ITP is used efficiently. In Thermococcus gammatolerans (strain DSM 15229 / JCM 11827 / EJ3), this protein is Protein archease.